The sequence spans 423 residues: Sphingomyelin phosphodiesterase 2 (423 aa).

Residue Glu-49 participates in Mg(2+) binding. His-272 serves as the catalytic Proton acceptor. 2 consecutive transmembrane segments (helical) span residues 330 to 350 and 354 to 374; these read VIGL…GGGA and AILL…FYLF. The interval 400–423 is disordered; sequence QDLGPEPQPALLLGQQEGDRTKEQ.

This sequence belongs to the neutral sphingomyelinase family. Mg(2+) serves as cofactor.

It localises to the cell membrane. The catalysed reaction is a sphingomyelin + H2O = phosphocholine + an N-acylsphing-4-enine + H(+). The enzyme catalyses an N-(acyl)-sphingosylphosphocholine + H2O = an N-acyl-sphingoid base + phosphocholine + H(+). It catalyses the reaction 1-O-octadecyl-sn-glycero-3-phosphocholine + H2O = 1-O-octadecyl-sn-glycerol + phosphocholine + H(+). It carries out the reaction 1-O-hexadecyl-sn-glycero-3-phosphocholine + H2O = 1-O-hexadecyl-sn-glycerol + phosphocholine + H(+). The catalysed reaction is 1-hexadecanoyl-sn-glycero-3-phosphocholine + H2O = 1-hexadecanoyl-sn-glycerol + phosphocholine + H(+). The enzyme catalyses a sphingosylphosphocholine + H2O = a sphingoid base + phosphocholine + H(+). Its pathway is lipid metabolism; sphingolipid metabolism. In terms of biological role, catalyzes, at least in vitro, the hydrolysis of sphingomyelin to form ceramide and phosphocholine. Also hydrolyzes 1-O-alkyl-2-lyso-sn-glycero-3-phosphocholine (lyso-platelet-activating factor) in vivo. Also acts on 1-acyl-2-lyso-sn-glycero-3-phosphocholine (lyso-PC) and sphingosylphosphocholine. The polypeptide is Sphingomyelin phosphodiesterase 2 (Homo sapiens (Human)).